Consider the following 789-residue polypeptide: MPAKGPLTPQQLSLINRYWRAANYLSVGQIYLMKNPLLREPLQPEHIKPRLLGHWGTTPGLNFIYAHLNRIIQQRNANVIYICGPGHGGPGMVANTYLEGTYSEIYPAISEDEAGMERLFRQFSFPGGIPSHAAPETPGSIHEGGELGYALVHAYGAAFDNPDLVVACVVGDGEAETGALATSWHSNKFLNPARDGAVLPILHLNGYKIANPTVLARLSDDDLDNLFRGYGYEPFFVEGSEPADMHQKMAATLDTIFQRIQDIKKNADVHSPERPRWPMIILRSPKGWTGPKTVDGLVVENYWRAHEVPVANCRENDAHRKILEDWMKSYDPSDLFDEKGALKPELRALAPKGEARIGANPHANGGLLRKELHMPDFRQYAVNVTEPGAIEAQSTKILGDFLRDVMKLNETEKNFRIFGPDETASNRLGSVLEATNRVWMAETLDMDDHLAADGRVMEVLSEHLCQGWLEGYLLSGRHGFFSCYEAFIHIIDSMFNQHAKWLQVARELEWRKPISSLNYLLTSHVWRQDHNGFSHQDPGFVDLVANKSADIARVYFPPDANTLLWVGDHCLKTWNRVNVIVAGKQPEPQWLTMAEAEKHCEAGLGIWEWAGTEDGLEPDIVMACAGDVPTMETLAAVDLLRQSLPHLRIRVVNVVDLMVLQSPHQHPHGISDEEFDRMFTTNRPVIFAYHGYPYLIHRLVYKRTNHSNFHVRGFIEQGTTTTPFDMTVLNELDRFHLAMEAVERLPLGESVAKPLIDNFTEKLALHKDYIRQHGEDMPEIRDWKWTWPR.

Belongs to the XFP family. Thiamine diphosphate serves as cofactor.

The protein is Probable phosphoketolase of Brucella abortus (strain 2308).